A 276-amino-acid chain; its full sequence is Expansin-A25 (276 aa).

The first 27 residues, 1–27 (MKLLEQMVYVECFMIIMATLLVSMSYG), serve as a signal peptide directing secretion. The 111-residue stretch at 73–183 (QGACGYGDLF…RRISCARTGG (111 aa)) folds into the Expansin-like EG45 domain. An Expansin-like CBD domain is found at 193–272 (YFLMILPYNV…NWGFGQTFDG (80 aa)).

This sequence belongs to the expansin family. Expansin A subfamily.

Its subcellular location is the secreted. It localises to the cell wall. The protein localises to the membrane. Its function is as follows. Causes loosening and extension of plant cell walls by disrupting non-covalent bonding between cellulose microfibrils and matrix glucans. No enzymatic activity has been found. The protein is Expansin-A25 (EXPA25) of Arabidopsis thaliana (Mouse-ear cress).